A 505-amino-acid polypeptide reads, in one-letter code: MAAELVEAMNMVKSFRVSDLQTLLASMGRSKSGLKQDLVGRALRLVQTEYSPELLKNVRQLYETRFPKASAWLAARRPETVAVNYPALNSSPRGTGQGTDYLNGIPKPAPPPAAEVKLVPLPFYHNLETLLPPTELVAQNSEKLQESQCVFDLTPNQVDQIRNSSELRPGMKSVQVVLRICYTDSIGVQEDQYPPNIAVKVNQSYCHVPGYYPSNKPGVEPRRPCRPVNITPWLHLSTVTNRVTITWGNFGKRYSVAVYLVRVFTSGELFNQLKHCSVENPDRCRERIQDKLRFDPESEIATTGLRVSLICPLVKMRLGVPCRVLTCAHLQCFDAVFFLQMNEKKPTWTCPVCDKPAPFELLTIDGLLSEILKETPEDVEEIEYLTDGSWRPIRDDKEKERERENSRTPDYPVVDICVPEANGHSPAHSGTNQTGKSGSGGASAGTGSTSGGSGGGTVVDLTLDDSSEEEGGGGAEDSEETDDSQDSPAPKRGRYDYDKDLVTAY.

Residues 12-46 (VKSFRVSDLQTLLASMGRSKSGLKQDLVGRALRLV) enclose the SAP domain. The LXXLL motif signature appears at 20–24 (LQTLL). Lys-35 is covalently cross-linked (Glycyl lysine isopeptide (Lys-Gly) (interchain with G-Cter in SUMO); alternate). Residue Lys-35 forms a Glycyl lysine isopeptide (Lys-Gly) (interchain with G-Cter in SUMO2); alternate linkage. Glycyl lysine isopeptide (Lys-Gly) (interchain with G-Cter in SUMO2) cross-links involve residues Lys-56 and Lys-68. In terms of domain architecture, PINIT spans 104-264 (GIPKPAPPPA…SVAVYLVRVF (161 aa)). Residues 296–381 (PESEIATTGL…LKETPEDVEE (86 aa)) form an SP-RING-type zinc finger. Positions 327, 329, 350, and 353 each coordinate Zn(2+). The interval 374–505 (ETPEDVEEIE…DYDKDLVTAY (132 aa)) is required for nuclear localization. Positions 395–407 (DDKEKERERENSR) are enriched in basic and acidic residues. The interval 395–505 (DDKEKERERE…DYDKDLVTAY (111 aa)) is disordered. Over residues 437-457 (SGSGGASAGTGSTSGGSGGGT) the composition is skewed to gly residues. Acidic residues predominate over residues 462 to 485 (TLDDSSEEEGGGGAEDSEETDDSQ). Residues 493 to 505 (GRYDYDKDLVTAY) are compositionally biased toward basic and acidic residues.

Belongs to the PIAS family. Post-translationally, sumoylated. Lys-35 is the main site of sumoylation. As to expression, highly expressed in spleen, liver, and brain. Expressed at lower levels in heart, intestine, kidney, gill, skin, and muscle.

The protein localises to the nucleus. It catalyses the reaction S-ubiquitinyl-[E2 ubiquitin-conjugating enzyme]-L-cysteine + [acceptor protein]-L-lysine = [E2 ubiquitin-conjugating enzyme]-L-cysteine + N(6)-ubiquitinyl-[acceptor protein]-L-lysine.. The protein operates within protein modification; protein sumoylation. In terms of biological role, functions as an E3-type small ubiquitin-like modifier (SUMO) ligase. May play a role as a transcriptional coregulator in various cellular pathways. Catalyzes conjugation of SUMO2 to KAT5 in response to DNA damage, facilitating repair of DNA double-strand breaks (DSBs) via homologous recombination (HR). Mediates sumoylation of PARP1 in response to PARP1 trapping to chromatin. Negatively regulates induction of interferon phi 1 (ifnphi1) mediated by mavs and ticam1/trif. Also inhibits ifnphi1-mediated activation of the interferon-stimulated genes (ISGs) pkz and cd40, and to a lesser extent rsad2 and isg15. May inhibit ticam1/trif-mediated activation of NF-kappa-B. In Danio rerio (Zebrafish), this protein is E3 SUMO-protein ligase PIAS4-A.